The primary structure comprises 91 residues: C-C motif chemokine 5 (91 aa).

The N-terminal stretch at M1–A23 is a signal peptide. 2 cysteine pairs are disulfide-bonded: C33/C57 and C34/C73.

Belongs to the intercrine beta (chemokine CC) family.

Its subcellular location is the secreted. Functionally, chemoattractant for blood monocytes, memory T-helper cells and eosinophils. Causes the release of histamine from basophils and activates eosinophils. May activate several chemokine receptors including CCR1, CCR3, CCR4 and CCR5. May also be an agonist of the G protein-coupled receptor GPR75. Together with GPR75, may play a role in neuron survival through activation of a downstream signaling pathway involving the PI3, Akt and MAP kinases. By activating GPR75 may also play a role in insulin secretion by islet cells. The chain is C-C motif chemokine 5 (CCL5) from Canis lupus familiaris (Dog).